The sequence spans 207 residues: Sodium/potassium-transporting ATPase subunit beta-1-interacting protein 1 (207 aa).

3 consecutive transmembrane segments (helical) span residues 2 to 22 (GRCS…AAAL), 35 to 55 (APIL…LGTL), and 62 to 82 (LILY…IICF). N-linked (GlcNAc...) asparagine glycosylation is present at Asn-100. The chain crosses the membrane as a helical span at residues 147–167 (ALSSALQIFLALFGFVYACYV).

The protein belongs to the NKAIN family. Interacts with atp1b1 C-terminus.

Its subcellular location is the cell membrane. This chain is Sodium/potassium-transporting ATPase subunit beta-1-interacting protein 1 (nkain1), found in Xenopus tropicalis (Western clawed frog).